The following is a 140-amino-acid chain: PDZ domain-containing protein 11 (140 aa).

The PDZ domain maps to 47–129 (TVVLKKPPGA…ITMRVRYFPY (83 aa)).

Its subcellular location is the cytoplasm. This Gallus gallus (Chicken) protein is PDZ domain-containing protein 11 (PDZD11).